The sequence spans 229 residues: Cytochrome c oxidase subunit 2 (229 aa).

Over 1–14 the chain is Mitochondrial intermembrane; the sequence is MANHLQFNFQDATS. The chain crosses the membrane as a helical span at residues 15-45; sequence PLMQELVKFHDHSLTILFFISALILYVLMMT. The Mitochondrial matrix portion of the chain corresponds to 46-59; sequence SLSKLTNKNILDSQ. A helical transmembrane segment spans residues 60 to 87; that stretch reads EIEMVWTVIPAFILIMLALPSIQILYLM. Residues 88–229 lie on the Mitochondrial intermembrane side of the membrane; that stretch reads DEIASPDITI…FESWIIKLSL (142 aa). Residues His-162, Cys-197, Glu-199, Cys-201, His-205, and Met-208 each coordinate Cu cation. Glu-199 is a binding site for Mg(2+).

This sequence belongs to the cytochrome c oxidase subunit 2 family. In terms of assembly, component of the cytochrome c oxidase (complex IV, CIV), a multisubunit enzyme composed of 14 subunits. The complex is composed of a catalytic core of 3 subunits MT-CO1, MT-CO2 and MT-CO3, encoded in the mitochondrial DNA, and 11 supernumerary subunits COX4I, COX5A, COX5B, COX6A, COX6B, COX6C, COX7A, COX7B, COX7C, COX8 and NDUFA4, which are encoded in the nuclear genome. The complex exists as a monomer or a dimer and forms supercomplexes (SCs) in the inner mitochondrial membrane with NADH-ubiquinone oxidoreductase (complex I, CI) and ubiquinol-cytochrome c oxidoreductase (cytochrome b-c1 complex, complex III, CIII), resulting in different assemblies (supercomplex SCI(1)III(2)IV(1) and megacomplex MCI(2)III(2)IV(2)). Found in a complex with TMEM177, COA6, COX18, COX20, SCO1 and SCO2. Interacts with TMEM177 in a COX20-dependent manner. Interacts with COX20. Interacts with COX16. Requires Cu cation as cofactor.

It is found in the mitochondrion inner membrane. It carries out the reaction 4 Fe(II)-[cytochrome c] + O2 + 8 H(+)(in) = 4 Fe(III)-[cytochrome c] + 2 H2O + 4 H(+)(out). Its function is as follows. Component of the cytochrome c oxidase, the last enzyme in the mitochondrial electron transport chain which drives oxidative phosphorylation. The respiratory chain contains 3 multisubunit complexes succinate dehydrogenase (complex II, CII), ubiquinol-cytochrome c oxidoreductase (cytochrome b-c1 complex, complex III, CIII) and cytochrome c oxidase (complex IV, CIV), that cooperate to transfer electrons derived from NADH and succinate to molecular oxygen, creating an electrochemical gradient over the inner membrane that drives transmembrane transport and the ATP synthase. Cytochrome c oxidase is the component of the respiratory chain that catalyzes the reduction of oxygen to water. Electrons originating from reduced cytochrome c in the intermembrane space (IMS) are transferred via the dinuclear copper A center (CU(A)) of subunit 2 and heme A of subunit 1 to the active site in subunit 1, a binuclear center (BNC) formed by heme A3 and copper B (CU(B)). The BNC reduces molecular oxygen to 2 water molecules using 4 electrons from cytochrome c in the IMS and 4 protons from the mitochondrial matrix. In Myxine glutinosa (Atlantic hagfish), this protein is Cytochrome c oxidase subunit 2 (MT-CO2).